A 256-amino-acid polypeptide reads, in one-letter code: Triosephosphate isomerase (256 aa).

12-14 (NWK) provides a ligand contact to substrate. The Electrophile role is filled by His-99. Catalysis depends on Glu-169, which acts as the Proton acceptor. Residues Gly-175, Ser-214, and 235–236 (GG) contribute to the substrate site.

It belongs to the triosephosphate isomerase family. In terms of assembly, homodimer.

It is found in the cytoplasm. The catalysed reaction is D-glyceraldehyde 3-phosphate = dihydroxyacetone phosphate. It functions in the pathway carbohydrate biosynthesis; gluconeogenesis. The protein operates within carbohydrate degradation; glycolysis; D-glyceraldehyde 3-phosphate from glycerone phosphate: step 1/1. Its function is as follows. Involved in the gluconeogenesis. Catalyzes stereospecifically the conversion of dihydroxyacetone phosphate (DHAP) to D-glyceraldehyde-3-phosphate (G3P). This chain is Triosephosphate isomerase, found in Rhizobium meliloti (strain 1021) (Ensifer meliloti).